Reading from the N-terminus, the 166-residue chain is MAEEEEAKTEANGQQQAPQMRVLGQFIRDMSFENIMAQKGAPSDAQPDVQVQVNLDAKKRTADNQYESAIKLNVTSKVKDGDATLFVLELDYVGIFHVDNVPDEQLHPFLLIECPRMIFPFLRRIVSDITRDGGFPPLNLENIDFLSLYRNELARRQSSEAPKMDA.

This sequence belongs to the SecB family. Homotetramer, a dimer of dimers. One homotetramer interacts with 1 SecA dimer.

Its subcellular location is the cytoplasm. In terms of biological role, one of the proteins required for the normal export of preproteins out of the cell cytoplasm. It is a molecular chaperone that binds to a subset of precursor proteins, maintaining them in a translocation-competent state. It also specifically binds to its receptor SecA. The chain is Protein-export protein SecB from Roseobacter denitrificans (strain ATCC 33942 / OCh 114) (Erythrobacter sp. (strain OCh 114)).